The sequence spans 37 residues: Large ribosomal subunit protein bL36 (37 aa).

The protein belongs to the bacterial ribosomal protein bL36 family.

This is Large ribosomal subunit protein bL36 from Deinococcus deserti (strain DSM 17065 / CIP 109153 / LMG 22923 / VCD115).